Here is an 81-residue protein sequence, read N- to C-terminus: ATP synthase subunit c (81 aa).

2 helical membrane passes run 7–27 (AASV…PGIG) and 57–77 (LAFM…LLFA).

It belongs to the ATPase C chain family. In terms of assembly, F-type ATPases have 2 components, F(1) - the catalytic core - and F(0) - the membrane proton channel. F(1) has five subunits: alpha(3), beta(3), gamma(1), delta(1), epsilon(1). F(0) has four main subunits: a(1), b(1), b'(1) and c(10-14). The alpha and beta chains form an alternating ring which encloses part of the gamma chain. F(1) is attached to F(0) by a central stalk formed by the gamma and epsilon chains, while a peripheral stalk is formed by the delta, b and b' chains.

The protein localises to the cellular thylakoid membrane. In terms of biological role, f(1)F(0) ATP synthase produces ATP from ADP in the presence of a proton or sodium gradient. F-type ATPases consist of two structural domains, F(1) containing the extramembraneous catalytic core and F(0) containing the membrane proton channel, linked together by a central stalk and a peripheral stalk. During catalysis, ATP synthesis in the catalytic domain of F(1) is coupled via a rotary mechanism of the central stalk subunits to proton translocation. Its function is as follows. Key component of the F(0) channel; it plays a direct role in translocation across the membrane. A homomeric c-ring of between 10-14 subunits forms the central stalk rotor element with the F(1) delta and epsilon subunits. This chain is ATP synthase subunit c, found in Synechococcus elongatus (strain ATCC 33912 / PCC 7942 / FACHB-805) (Anacystis nidulans R2).